Reading from the N-terminus, the 253-residue chain is Sulfate transporter CysZ (253 aa).

Helical transmembrane passes span 31–51 (FVIL…WWLF), 72–92 (LSYL…GYFF), 151–171 (IVLL…PVLW), and 222–242 (IPVL…AMWV).

Belongs to the CysZ family.

The protein resides in the cell inner membrane. In terms of biological role, possibly involved in sulfate transport. Its function is as follows. High affinity, high specificity proton-dependent sulfate transporter, which mediates sulfate uptake. Provides the sulfur source for the cysteine synthesis pathway. The protein is Sulfate transporter CysZ of Salmonella typhimurium (strain LT2 / SGSC1412 / ATCC 700720).